A 171-amino-acid chain; its full sequence is Putative phosphoesterase ABC1741 (171 aa).

H34 functions as the Proton donor in the catalytic mechanism. 2 short sequence motifs (HXTX) span residues H34–L37 and H116–I119. H116 acts as the Proton acceptor in catalysis.

Belongs to the 2H phosphoesterase superfamily. YjcG family.

The protein is Putative phosphoesterase ABC1741 of Shouchella clausii (strain KSM-K16) (Alkalihalobacillus clausii).